A 312-amino-acid chain; its full sequence is Ribosomal RNA small subunit methyltransferase H (312 aa).

Residues 34–36 (AGH), D54, F81, D102, and Q109 each bind S-adenosyl-L-methionine.

It belongs to the methyltransferase superfamily. RsmH family.

It localises to the cytoplasm. The enzyme catalyses cytidine(1402) in 16S rRNA + S-adenosyl-L-methionine = N(4)-methylcytidine(1402) in 16S rRNA + S-adenosyl-L-homocysteine + H(+). Its function is as follows. Specifically methylates the N4 position of cytidine in position 1402 (C1402) of 16S rRNA. The protein is Ribosomal RNA small subunit methyltransferase H of Geotalea daltonii (strain DSM 22248 / JCM 15807 / FRC-32) (Geobacter daltonii).